We begin with the raw amino-acid sequence, 554 residues long: uncharacterized protein (554 aa).

Positions 1-33 are cleaved as a signal peptide; that stretch reads MKKILIIILFIIIFIVLIYSGLWFVIMFSLSHS.

This is an uncharacterized protein from Rickettsia prowazekii (strain Madrid E).